We begin with the raw amino-acid sequence, 561 residues long: DNA ligase (561 aa).

Residue E253 coordinates ATP. Residue K255 is the N6-AMP-lysine intermediate of the active site. Residues R260, R275, E304, F344, R421, and K427 each coordinate ATP.

It belongs to the ATP-dependent DNA ligase family. It depends on Mg(2+) as a cofactor.

It catalyses the reaction ATP + (deoxyribonucleotide)n-3'-hydroxyl + 5'-phospho-(deoxyribonucleotide)m = (deoxyribonucleotide)n+m + AMP + diphosphate.. In terms of biological role, DNA ligase that seals nicks in double-stranded DNA during DNA replication, DNA recombination and DNA repair. This is DNA ligase from Halobacterium salinarum (strain ATCC 29341 / DSM 671 / R1).